The sequence spans 481 residues: Beta-amyrin 28-monooxygenase (481 aa).

A helical membrane pass occupies residues 4 to 24; it reads FYVPLLSLFVLFISLSFHFLF. Residue Cys-428 coordinates heme.

This sequence belongs to the cytochrome P450 family. Heme is required as a cofactor. In terms of tissue distribution, mostly expressed in roots, and, to a lower extent, in stems and leaves. Accumulates only in the rhizome of plants.

The protein localises to the membrane. It catalyses the reaction beta-amyrin + 3 reduced [NADPH--hemoprotein reductase] + 3 O2 = oleanolate + 3 oxidized [NADPH--hemoprotein reductase] + 4 H2O + 4 H(+). It participates in secondary metabolite biosynthesis; terpenoid biosynthesis. In terms of biological role, component of the oleanane-type triterpene saponins (e.g. ginsenosides or panaxosides) biosynthetic pathway. Catalyzes the carboxylation of beta-amyrin at the C-28 position to form oleanolic acid during ginsenoside biosynthesis, a class of tetracyclic triterpenoid saponins. The polypeptide is Beta-amyrin 28-monooxygenase (Panax ginseng (Korean ginseng)).